The following is a 235-amino-acid chain: Ribonuclease PH (235 aa).

Residues Arg-86 and 124 to 126 each bind phosphate; that span reads GTR.

The protein belongs to the RNase PH family. As to quaternary structure, homohexameric ring arranged as a trimer of dimers.

It carries out the reaction tRNA(n+1) + phosphate = tRNA(n) + a ribonucleoside 5'-diphosphate. Its function is as follows. Phosphorolytic 3'-5' exoribonuclease that plays an important role in tRNA 3'-end maturation. Removes nucleotide residues following the 3'-CCA terminus of tRNAs; can also add nucleotides to the ends of RNA molecules by using nucleoside diphosphates as substrates, but this may not be physiologically important. Probably plays a role in initiation of 16S rRNA degradation (leading to ribosome degradation) during starvation. The polypeptide is Ribonuclease PH (Francisella tularensis subsp. tularensis (strain FSC 198)).